The primary structure comprises 231 residues: Tegument protein UL51 homolog (231 aa).

Residue C12 is the site of S-palmitoyl cysteine; by host attachment.

It belongs to the herpesviridae UL51 family. In terms of assembly, oligomerizes. Interacts with U75; this interaction mediates U75 incorporation to virions. In terms of processing, phosphorylated. Palmitoylation is necessary for Golgi localization.

The protein localises to the virion tegument. It localises to the host cytoplasm. It is found in the host Golgi apparatus. In terms of biological role, plays several roles during the time course of infection, including egress of virus particles from the perinuclear space and secondary envelopment of cytoplasmic capsids that bud into specific trans-Golgi network (TGN)-derived membranes. This is Tegument protein UL51 homolog (U44) from Human herpesvirus 6B (strain Z29) (HHV-6 variant B).